The following is a 113-amino-acid chain: T cell receptor alpha variable 5 (113 aa).

Residues 1–22 form the signal peptide; it reads MKTFAGFSFLFLWLQLDCMSRG. The region spanning 23 to 113 is the Ig-like domain; that stretch reads EDVEQSLFLS…DSAIYFCAES (91 aa). The N-linked (GlcNAc...) asparagine glycan is linked to Asn42. Cys43 and Cys110 are disulfide-bonded.

As to quaternary structure, alpha-beta TR is a heterodimer composed of an alpha and beta chain; disulfide-linked. The alpha-beta TR is associated with the transmembrane signaling CD3 coreceptor proteins to form the TR-CD3 (TcR or TCR). The assembly of alpha-beta TR heterodimers with CD3 occurs in the endoplasmic reticulum where a single alpha-beta TR heterodimer associates with one CD3D-CD3E heterodimer, one CD3G-CD3E heterodimer and one CD247 homodimer forming a stable octameric structure. CD3D-CD3E and CD3G-CD3E heterodimers preferentially associate with TR alpha and TR beta chains, respectively. The association of the CD247 homodimer is the last step of TcR assembly in the endoplasmic reticulum and is required for transport to the cell surface.

It is found in the cell membrane. Its function is as follows. V region of the variable domain of T cell receptor (TR) alpha chain that participates in the antigen recognition. Alpha-beta T cell receptors are antigen specific receptors which are essential to the immune response and are present on the cell surface of T lymphocytes. Recognize peptide-major histocompatibility (MH) (pMH) complexes that are displayed by antigen presenting cells (APC), a prerequisite for efficient T cell adaptive immunity against pathogens. Binding of alpha-beta TR to pMH complex initiates TR-CD3 clustering on the cell surface and intracellular activation of LCK that phosphorylates the ITAM motifs of CD3G, CD3D, CD3E and CD247 enabling the recruitment of ZAP70. In turn ZAP70 phosphorylates LAT, which recruits numerous signaling molecules to form the LAT signalosome. The LAT signalosome propagates signal branching to three major signaling pathways, the calcium, the mitogen-activated protein kinase (MAPK) kinase and the nuclear factor NF-kappa-B (NF-kB) pathways, leading to the mobilization of transcription factors that are critical for gene expression and essential for T cell growth and differentiation. The T cell repertoire is generated in the thymus, by V-(D)-J rearrangement. This repertoire is then shaped by intrathymic selection events to generate a peripheral T cell pool of self-MH restricted, non-autoaggressive T cells. Post-thymic interaction of alpha-beta TR with the pMH complexes shapes TR structural and functional avidity. The polypeptide is T cell receptor alpha variable 5 (Homo sapiens (Human)).